The following is a 278-amino-acid chain: Undecaprenyl-diphosphatase 3 (278 aa).

The next 6 membrane-spanning stretches (helical) occupy residues 42-62 (DITA…LLYF), 88-108 (YRFG…GVAF), 119-139 (LWFV…ADHV), 187-207 (VAVT…AAAL), 224-244 (ATII…AWLL), and 254-274 (VFIG…ATGI).

The protein belongs to the UppP family.

It localises to the cell membrane. The catalysed reaction is di-trans,octa-cis-undecaprenyl diphosphate + H2O = di-trans,octa-cis-undecaprenyl phosphate + phosphate + H(+). Its function is as follows. Catalyzes the dephosphorylation of undecaprenyl diphosphate (UPP). Confers resistance to bacitracin. The protein is Undecaprenyl-diphosphatase 3 of Frankia casuarinae (strain DSM 45818 / CECT 9043 / HFP020203 / CcI3).